The sequence spans 422 residues: Mannose-1-phosphate guanylyltransferase regulatory subunit alpha-A (422 aa).

Residues 2–253 form a substrate-binding domain region; it reads LKAVILIGGP…DRFWSQIKSA (252 aa). 2 residues coordinate GDP-alpha-D-mannose: E85 and Q249. The segment at 275 to 422 is hexapeptide repeat domain; that stretch reads LATNTEGGAK…NRSFKNQIIL (148 aa). Residues 358-386 form a C-loop region; the sequence is TPSDPNPNDPYAKIDSETLFRDGKLTPSI.

The protein belongs to the transferase hexapeptide repeat family. Component of the GMPPA-GMPPB mannose-1-phosphate guanylyltransferase complex composed of 4 gmppa subunits and 8 gmppb subunits; the complex is organized into three layers, a central layer made up of 2 gmppa dimers sandwiched between two layers each made up of 2 gmppb dimers.

Its pathway is nucleotide-sugar biosynthesis; GDP-alpha-D-mannose biosynthesis; GDP-alpha-D-mannose from alpha-D-mannose 1-phosphate (GTP route): step 1/1. Its function is as follows. Regulatory subunit of the GMPPA-GMPPB mannose-1-phosphate guanylyltransferase complex; reduces the catalytic activity of GMPPB when part of the complex. Mediates allosteric feedback inhibition of GMPPB catalytic activity upon binding GDP-alpha-D-mannose. Together with GMPPB regulates GDP-alpha-D-mannose levels. One of two paralogs (gmppaa and gmppab) that may have redundant functions. The chain is Mannose-1-phosphate guanylyltransferase regulatory subunit alpha-A (gmppaa) from Danio rerio (Zebrafish).